The chain runs to 688 residues: G protein-coupled receptor kinase 3 (688 aa).

Positions 1–190 (MADLEAVLAD…ELNIHLTMND (190 aa)) are N-terminal. Positions 54–175 (TFDKIFNQRI…MESDKFTRFC (122 aa)) constitute an RGS domain. The 263-residue stretch at 191 to 453 (FSVHRIIGRG…AQELKTHDFF (263 aa)) folds into the Protein kinase domain. Residues 197–205 (IGRGGFGEV) and Lys-220 contribute to the ATP site. Asp-317 acts as the Proton acceptor in catalysis. The AGC-kinase C-terminal domain occupies 454–521 (RGIDWQHVYL…VISERWQQEV (68 aa)). A PH domain is found at 558–652 (DCIVHGYMLK…WKKELTETFM (95 aa)).

The protein belongs to the protein kinase superfamily. AGC Ser/Thr protein kinase family. GPRK subfamily. In terms of assembly, interacts with GIT1. Post-translationally, ubiquitinated. In terms of tissue distribution, ubiquitous; brain, spleen &gt; heart, lung &gt; kidney.

The protein localises to the postsynapse. It is found in the presynapse. The enzyme catalyses [beta-adrenergic receptor] + ATP = [beta-adrenergic receptor]-phosphate + ADP + H(+). In terms of biological role, specifically phosphorylates the agonist-occupied form of the beta-adrenergic and closely related receptors. This Bos taurus (Bovine) protein is G protein-coupled receptor kinase 3.